A 353-amino-acid chain; its full sequence is GTPase Obg (353 aa).

Positions 1 to 159 (MKFLDEAKVY…RWIWLRLKLI (159 aa)) constitute an Obg domain. In terms of domain architecture, OBG-type G spans 160-327 (ADAGLVGLPN…ALRALAAVIG (168 aa)). GTP contacts are provided by residues 166-173 (GLPNAGKS), 191-195 (FTTLH), 212-215 (DIPG), 279-282 (NKID), and 308-310 (SGI). Mg(2+) is bound by residues serine 173 and threonine 193. Residues 332–353 (SDKAKGAADNAANAEPWAPQDA) are disordered.

Belongs to the TRAFAC class OBG-HflX-like GTPase superfamily. OBG GTPase family. In terms of assembly, monomer. It depends on Mg(2+) as a cofactor.

Its subcellular location is the cytoplasm. Its function is as follows. An essential GTPase which binds GTP, GDP and possibly (p)ppGpp with moderate affinity, with high nucleotide exchange rates and a fairly low GTP hydrolysis rate. Plays a role in control of the cell cycle, stress response, ribosome biogenesis and in those bacteria that undergo differentiation, in morphogenesis control. The chain is GTPase Obg from Rhodopseudomonas palustris (strain HaA2).